The following is a 265-amino-acid chain: 5'-nucleotidase SurE (265 aa).

A divalent metal cation contacts are provided by aspartate 8, aspartate 9, serine 39, and asparagine 96.

Belongs to the SurE nucleotidase family. A divalent metal cation serves as cofactor.

The protein localises to the cytoplasm. The catalysed reaction is a ribonucleoside 5'-phosphate + H2O = a ribonucleoside + phosphate. Functionally, nucleotidase that shows phosphatase activity on nucleoside 5'-monophosphates. The polypeptide is 5'-nucleotidase SurE (Rubrobacter xylanophilus (strain DSM 9941 / JCM 11954 / NBRC 16129 / PRD-1)).